Consider the following 474-residue polypeptide: ATP synthase subunit beta 2 (474 aa).

ATP is bound at residue Gly-156–Thr-163.

Belongs to the ATPase alpha/beta chains family. As to quaternary structure, F-type ATPases have 2 components, CF(1) - the catalytic core - and CF(0) - the membrane proton channel. CF(1) has five subunits: alpha(3), beta(3), gamma(1), delta(1), epsilon(1). CF(0) has three main subunits: a(1), b(2) and c(9-12). The alpha and beta chains form an alternating ring which encloses part of the gamma chain. CF(1) is attached to CF(0) by a central stalk formed by the gamma and epsilon chains, while a peripheral stalk is formed by the delta and b chains.

It is found in the cell inner membrane. The catalysed reaction is ATP + H2O + 4 H(+)(in) = ADP + phosphate + 5 H(+)(out). In terms of biological role, produces ATP from ADP in the presence of a proton gradient across the membrane. The catalytic sites are hosted primarily by the beta subunits. This chain is ATP synthase subunit beta 2, found in Shewanella frigidimarina (strain NCIMB 400).